The primary structure comprises 213 residues: Orotate phosphoribosyltransferase (213 aa).

K26 is a 5-phospho-alpha-D-ribose 1-diphosphate binding site. Orotate is bound at residue 34–35; that stretch reads FF. 5-phospho-alpha-D-ribose 1-diphosphate contacts are provided by residues 72–73, R99, K100, K103, H105, and 124–132; these read YK and DDVITAGTA. Orotate is bound by residues T128 and R156.

It belongs to the purine/pyrimidine phosphoribosyltransferase family. PyrE subfamily. Homodimer. The cofactor is Mg(2+).

The catalysed reaction is orotidine 5'-phosphate + diphosphate = orotate + 5-phospho-alpha-D-ribose 1-diphosphate. The protein operates within pyrimidine metabolism; UMP biosynthesis via de novo pathway; UMP from orotate: step 1/2. Catalyzes the transfer of a ribosyl phosphate group from 5-phosphoribose 1-diphosphate to orotate, leading to the formation of orotidine monophosphate (OMP). The polypeptide is Orotate phosphoribosyltransferase (Escherichia coli O127:H6 (strain E2348/69 / EPEC)).